A 115-amino-acid polypeptide reads, in one-letter code: NADH-ubiquinone oxidoreductase chain 3 (115 aa).

Helical transmembrane passes span 3 to 23 (LMLT…IAFW), 55 to 75 (FFLV…LLPL), and 87 to 107 (VLFM…YEWI).

This sequence belongs to the complex I subunit 3 family. As to quaternary structure, core subunit of respiratory chain NADH dehydrogenase (Complex I) which is composed of 45 different subunits. Interacts with TMEM186. Interacts with TMEM242.

Its subcellular location is the mitochondrion inner membrane. The catalysed reaction is a ubiquinone + NADH + 5 H(+)(in) = a ubiquinol + NAD(+) + 4 H(+)(out). Its function is as follows. Core subunit of the mitochondrial membrane respiratory chain NADH dehydrogenase (Complex I) which catalyzes electron transfer from NADH through the respiratory chain, using ubiquinone as an electron acceptor. Essential for the catalytic activity of complex I. This Dugong dugon (Dugong) protein is NADH-ubiquinone oxidoreductase chain 3.